Reading from the N-terminus, the 449-residue chain is Allantoinase (449 aa).

Zn(2+)-binding residues include His-61, His-63, Lys-148, His-184, His-240, and Asp-313. An N6-carboxylysine modification is found at Lys-148.

The protein belongs to the metallo-dependent hydrolases superfamily. Allantoinase family. Homotetramer. It depends on Zn(2+) as a cofactor. Post-translationally, carboxylation allows a single lysine to coordinate two zinc ions.

It catalyses the reaction (S)-allantoin + H2O = allantoate + H(+). The protein operates within nitrogen metabolism; (S)-allantoin degradation; allantoate from (S)-allantoin: step 1/1. In terms of biological role, catalyzes the conversion of allantoin (5-ureidohydantoin) to allantoic acid by hydrolytic cleavage of the five-member hydantoin ring. This Desulfitobacterium hafniense (strain DSM 10664 / DCB-2) protein is Allantoinase.